We begin with the raw amino-acid sequence, 83 residues long: Small ribosomal subunit protein bS20 (83 aa).

Belongs to the bacterial ribosomal protein bS20 family.

In terms of biological role, binds directly to 16S ribosomal RNA. The polypeptide is Small ribosomal subunit protein bS20 (Lactobacillus delbrueckii subsp. bulgaricus (strain ATCC 11842 / DSM 20081 / BCRC 10696 / JCM 1002 / NBRC 13953 / NCIMB 11778 / NCTC 12712 / WDCM 00102 / Lb 14)).